A 399-amino-acid chain; its full sequence is Elongation factor Tu (399 aa).

In terms of domain architecture, tr-type G spans 10–209 (KPHVNIGTIG…DVDEYIPTPV (200 aa)). The tract at residues 19–26 (GHVDHGKT) is G1. 19 to 26 (GHVDHGKT) is a GTP binding site. T26 contacts Mg(2+). The segment at 62–66 (GITIN) is G2. Residues 83–86 (DCPG) form a G3 region. GTP is bound by residues 83 to 87 (DCPGH) and 138 to 141 (NKCD). The segment at 138-141 (NKCD) is G4. The tract at residues 175-177 (SAY) is G5.

This sequence belongs to the TRAFAC class translation factor GTPase superfamily. Classic translation factor GTPase family. EF-Tu/EF-1A subfamily. In terms of assembly, monomer.

The protein localises to the cytoplasm. It carries out the reaction GTP + H2O = GDP + phosphate + H(+). GTP hydrolase that promotes the GTP-dependent binding of aminoacyl-tRNA to the A-site of ribosomes during protein biosynthesis. The polypeptide is Elongation factor Tu (Bifidobacterium animalis subsp. lactis (strain AD011)).